Reading from the N-terminus, the 293-residue chain is Pyridoxal 5'-phosphate synthase subunit PdxS (293 aa).

D23 is a D-ribose 5-phosphate binding site. Residue K80 is the Schiff-base intermediate with D-ribose 5-phosphate of the active site. G152 is a binding site for D-ribose 5-phosphate. R164 provides a ligand contact to D-glyceraldehyde 3-phosphate. D-ribose 5-phosphate-binding positions include G213 and 234–235 (GS).

The protein belongs to the PdxS/SNZ family. In the presence of PdxT, forms a dodecamer of heterodimers.

It carries out the reaction aldehydo-D-ribose 5-phosphate + D-glyceraldehyde 3-phosphate + L-glutamine = pyridoxal 5'-phosphate + L-glutamate + phosphate + 3 H2O + H(+). It participates in cofactor biosynthesis; pyridoxal 5'-phosphate biosynthesis. Functionally, catalyzes the formation of pyridoxal 5'-phosphate from ribose 5-phosphate (RBP), glyceraldehyde 3-phosphate (G3P) and ammonia. The ammonia is provided by the PdxT subunit. Can also use ribulose 5-phosphate and dihydroxyacetone phosphate as substrates, resulting from enzyme-catalyzed isomerization of RBP and G3P, respectively. In Thermus thermophilus (strain ATCC 27634 / DSM 579 / HB8), this protein is Pyridoxal 5'-phosphate synthase subunit PdxS.